Consider the following 309-residue polypeptide: HTH-type transcriptional activator AaeR (309 aa).

The 59-residue stretch at 1-59 (MERLKRMSVFAKVVEFGSFTAAARQLQMSVSSISQTVSKLEDELQVKLLNRSTRSIGLT) folds into the HTH lysR-type domain. A DNA-binding region (H-T-H motif) is located at residues 19-38 (FTAAARQLQMSVSSISQTVS).

The protein belongs to the LysR transcriptional regulatory family.

Activity is regulated by p-hydroxybenzoic acid. Transcriptional regulator that activates expression of the aaeXAB operon, which is involved in the efflux of aromatic carboxylic acids such as p-hydroxybenzoic acid (pHBA). In the presence of the effector pHBA, acts by binding to a single target within the aaeXAB-aaeR intergenic region. In the absence of pHBA, binds more than 50 sites along the E.coli K12 genome, including genes related to biofilm formation and several genes involved in stress response, suggesting that it might play a role in quorum sensing in the absence of pHBA. This is HTH-type transcriptional activator AaeR from Escherichia coli (strain K12).